A 339-amino-acid chain; its full sequence is Pre-mRNA-splicing factor syf2 (339 aa).

The interval 1 to 136 is disordered; it reads MPPEKKRKTE…LQSDPSQLTA (136 aa). Residues 7-16 are compositionally biased toward basic and acidic residues; it reads RKTEPEDKAE. Positions 17 to 37 are enriched in polar residues; sequence VTQQENDVAESTTEPNNQTVT. A compositionally biased stretch (low complexity) spans 45–93; sequence VTEAALATTSSSSPPVLSASETAQPDTAATSQSSSTPPTSTSAAESAAA. Residues 94-103 show a composition bias toward basic and acidic residues; the sequence is KARERAERFR. The span at 126 to 135 shows a compositional bias: polar residues; that stretch reads RLQSDPSQLT.

It belongs to the SYF2 family. As to quaternary structure, associated with the spliceosome.

The protein resides in the nucleus. Functionally, involved in pre-mRNA splicing. This Neurospora crassa (strain ATCC 24698 / 74-OR23-1A / CBS 708.71 / DSM 1257 / FGSC 987) protein is Pre-mRNA-splicing factor syf2 (msp-4).